We begin with the raw amino-acid sequence, 301 residues long: Nucleotide-binding protein Mb1456 (301 aa).

An ATP-binding site is contributed by 24–31 (GLSGAGRG). 75–78 (DVRS) is a binding site for GTP.

Belongs to the RapZ-like family.

Its function is as follows. Displays ATPase and GTPase activities. The protein is Nucleotide-binding protein Mb1456 of Mycobacterium bovis (strain ATCC BAA-935 / AF2122/97).